Here is a 597-residue protein sequence, read N- to C-terminus: Elongation factor 4 (597 aa).

The tr-type G domain maps to Asp2–Lys184. Residues Asp14–Thr19 and Asn131–Asp134 each bind GTP.

The protein belongs to the TRAFAC class translation factor GTPase superfamily. Classic translation factor GTPase family. LepA subfamily.

The protein resides in the cell inner membrane. The catalysed reaction is GTP + H2O = GDP + phosphate + H(+). In terms of biological role, required for accurate and efficient protein synthesis under certain stress conditions. May act as a fidelity factor of the translation reaction, by catalyzing a one-codon backward translocation of tRNAs on improperly translocated ribosomes. Back-translocation proceeds from a post-translocation (POST) complex to a pre-translocation (PRE) complex, thus giving elongation factor G a second chance to translocate the tRNAs correctly. Binds to ribosomes in a GTP-dependent manner. The polypeptide is Elongation factor 4 (Burkholderia multivorans (strain ATCC 17616 / 249)).